Consider the following 558-residue polypeptide: MELRARGWWLLCAAAALVACARGDPASKSRSCGEVRQIYGAKGFSLSDVPQAEISGEHLRICPQGYTCCTSEMEENLANRSHAELETALRDSSRVLQAMLATQLRSFDDHFQHLLNDSERTLQATFPGAFGELYTQNARAFRDLYSELRLYYRGANLHLEETLAEFWARLLERLFKQLHPQLLLPDDYLDCLGKQAEALRPFGEAPRELRLRATRAFVAARSFVQGLGVASDVVRKVAQVPLGPECSRAVMKLVYCAHCLGVPGARPCPDYCRNVLKGCLANQADLDAEWRNLLDSMVLITDKFWGTSGVESVIGSVHTWLAEAINALQDNRDTLTAKVIQGCGNPKVNPQGPGPEEKRRRGKLAPRERPPSGTLEKLVSEAKAQLRDVQDFWISLPGTLCSEKMALSTASDDRCWNGMARGRYLPEVMGDGLANQINNPEVEVDITKPDMTIRQQIMQLKIMTNRLRSAYNGNDVDFQDASDDGSGSGSGDGCLDDLCSRKVSRKSSSSRTPLTHALPGLSEQEGQKTSAASCPQPPTFLLPLLLFLALTVARPRWR.

An N-terminal signal peptide occupies residues 1 to 23; that stretch reads MELRARGWWLLCAAAALVACARG. Cystine bridges form between C32-C68, C62-C256, C69-C259, C191-C343, C246-C279, C268-C415, and C272-C401. Residues N79 and N116 are each glycosylated (N-linked (GlcNAc...) asparagine). The tract at residues 341 to 374 is disordered; sequence QGCGNPKVNPQGPGPEEKRRRGKLAPRERPPSGT. Over residues 355–370 the composition is skewed to basic and acidic residues; sequence PEEKRRRGKLAPRERP. Residues S486, S488, and S490 are each glycosylated (O-linked (Xyl...) (heparan sulfate) serine). The segment at 505–534 is disordered; sequence RKSSSSRTPLTHALPGLSEQEGQKTSAASC. Residue S530 is the site of GPI-anchor amidated serine attachment. Positions 531 to 558 are cleaved as a propeptide — removed in mature form; that stretch reads AASCPQPPTFLLPLLLFLALTVARPRWR.

Belongs to the glypican family. Post-translationally, S-nitrosylated in a Cu(2+)-dependent manner. Nitric acid (NO) is released from the nitrosylated cysteines by ascorbate or by some other reducing agent, in a Cu(2+) or Zn(2+) dependent manner. This free nitric oxide is then capable of cleaving the heparan sulfate side chains. In terms of processing, N- and O-glycosylated. N-glycosylation is mainly of the complex type containing sialic acid. O-glycosylated with heparan sulfate. The heparan sulfate chains can be cleaved either by the action of heparanase or, degraded by a deaminative process that uses nitric oxide (NO) released from the S-nitrosylated cysteines. This process is triggered by ascorbate, or by some other reducing agent, in a Cu(2+)- or Zn(2+) dependent manner. Cu(2+) ions are provided by ceruloproteins such as APP, PRNP or CP which associate with GCP1 in intracellular compartments or lipid rafts. This cell-associated glypican is further processed to give rise to a medium-released species.

It localises to the cell membrane. The protein resides in the endosome. Its subcellular location is the secreted. The protein localises to the extracellular space. In terms of biological role, cell surface proteoglycan that bears heparan sulfate. Binds, via the heparan sulfate side chains, alpha-4 (V) collagen and participates in Schwann cell myelination. May act as a catalyst in increasing the rate of conversion of prion protein PRPN(C) to PRNP(Sc) via associating (via the heparan sulfate side chains) with both forms of PRPN, targeting them to lipid rafts and facilitating their interaction. Required for proper skeletal muscle differentiation by sequestering FGF2 in lipid rafts preventing its binding to receptors (FGFRs) and inhibiting the FGF-mediated signaling. This chain is Glypican-1 (GPC1), found in Homo sapiens (Human).